The following is a 96-amino-acid chain: Large ribosomal subunit protein uL23 (96 aa).

The protein belongs to the universal ribosomal protein uL23 family. In terms of assembly, part of the 50S ribosomal subunit. Contacts protein L29, and trigger factor when it is bound to the ribosome.

Functionally, one of the early assembly proteins it binds 23S rRNA. One of the proteins that surrounds the polypeptide exit tunnel on the outside of the ribosome. Forms the main docking site for trigger factor binding to the ribosome. The protein is Large ribosomal subunit protein uL23 of Bacillus mycoides (strain KBAB4) (Bacillus weihenstephanensis).